We begin with the raw amino-acid sequence, 280 residues long: Orotidine 5'-phosphate decarboxylase (280 aa).

Lys97 (proton donor) is an active-site residue.

It belongs to the OMP decarboxylase family. Type 2 subfamily.

It catalyses the reaction orotidine 5'-phosphate + H(+) = UMP + CO2. The protein operates within pyrimidine metabolism; UMP biosynthesis via de novo pathway; UMP from orotate: step 2/2. The protein is Orotidine 5'-phosphate decarboxylase (pyrF) of Corynebacterium efficiens (strain DSM 44549 / YS-314 / AJ 12310 / JCM 11189 / NBRC 100395).